The following is a 288-amino-acid chain: 2-hydroxy-6-oxononadienedioate/2-hydroxy-6-oxononatrienedioate hydrolase (288 aa).

Positions 38–274 constitute an AB hydrolase-1 domain; the sequence is ALVLLHGSGP…RCGHWAQWEH (237 aa). H268 acts as the Proton acceptor in catalysis.

Belongs to the AB hydrolase superfamily. MhpC family. Homodimer.

The catalysed reaction is (2Z,4E)-2-hydroxy-6-oxonona-2,4-dienedioate + H2O = (2Z)-2-hydroxypenta-2,4-dienoate + succinate + H(+). The enzyme catalyses (2Z,4E,7E)-2-hydroxy-6-oxonona-2,4,7-trienedioate + H2O = (2Z)-2-hydroxypenta-2,4-dienoate + fumarate + H(+). It functions in the pathway aromatic compound metabolism; 3-phenylpropanoate degradation. In terms of biological role, catalyzes the cleavage of the C5-C6 bond of 2-hydroxy-6-oxononadienedioate and 2-hydroxy-6-oxononatrienedioate, a dienol ring fission product of the bacterial meta-cleavage pathway for degradation of phenylpropionic acid. In Burkholderia vietnamiensis (strain G4 / LMG 22486) (Burkholderia cepacia (strain R1808)), this protein is 2-hydroxy-6-oxononadienedioate/2-hydroxy-6-oxononatrienedioate hydrolase.